The following is a 90-amino-acid chain: Putative beta-neurotoxin RjAa2f (90 aa).

An N-terminal signal peptide occupies residues 1 to 18 (MKILIFIIASFMLIGVEC). The region spanning 19–89 (KEGYPMGSDG…VWDSKTNKCG (71 aa)) is the LCN-type CS-alpha/beta domain. Disulfide bonds link Cys-29/Cys-88, Cys-33/Cys-62, Cys-40/Cys-69, and Cys-44/Cys-71.

Belongs to the long (4 C-C) scorpion toxin superfamily. Sodium channel inhibitor family. Beta subfamily. As to expression, expressed by the venom gland.

The protein localises to the secreted. Beta toxins bind voltage-independently at site-4 of sodium channels (Nav) and shift the voltage of activation toward more negative potentials thereby affecting sodium channel activation and promoting spontaneous and repetitive firing. The sequence is that of Putative beta-neurotoxin RjAa2f from Rhopalurus junceus (Caribbean blue scorpion).